The primary structure comprises 146 residues: Hemoglobin subunit beta (146 aa).

The Globin domain maps to 2-146 (HWTAEEKQLI…VAHALARKYH (145 aa)). Residues histidine 63 and histidine 92 each contribute to the heme b site.

It belongs to the globin family. Heterotetramer of two alpha chains and two beta chains. Red blood cells.

Its function is as follows. Involved in oxygen transport from the lung to the various peripheral tissues. The protein is Hemoglobin subunit beta (HBB) of Ara ararauna (Blue-and-yellow macaw).